Here is a 428-residue protein sequence, read N- to C-terminus: GTPase Obg (428 aa).

In terms of domain architecture, Obg spans 1-158; that stretch reads MFVDQVKIYV…RDVILELKVL (158 aa). The region spanning 159–329 is the OBG-type G domain; the sequence is ADVGLVGFPS…LLFEVANLLE (171 aa). GTP is bound by residues 165–172, 190–194, 212–215, 282–285, and 310–312; these read GFPSVGKS, FTTIV, DLPG, NKMD, and SAV. Residues Ser172 and Thr192 each coordinate Mg(2+). The OCT domain occupies 350–428; that stretch reads KLETEGVKFD…ILEYEFEFID (79 aa).

This sequence belongs to the TRAFAC class OBG-HflX-like GTPase superfamily. OBG GTPase family. As to quaternary structure, monomer. The cofactor is Mg(2+).

Its subcellular location is the cytoplasm. Its function is as follows. An essential GTPase which binds GTP, GDP and possibly (p)ppGpp with moderate affinity, with high nucleotide exchange rates and a fairly low GTP hydrolysis rate. Plays a role in control of the cell cycle, stress response, ribosome biogenesis and in those bacteria that undergo differentiation, in morphogenesis control. The polypeptide is GTPase Obg (Bacillus cereus (strain Q1)).